The sequence spans 300 residues: Acetylglutamate kinase (300 aa).

Substrate is bound by residues 68-69 (GG), Arg90, and Asn194.

The protein belongs to the acetylglutamate kinase family. ArgB subfamily.

The protein localises to the cytoplasm. The enzyme catalyses N-acetyl-L-glutamate + ATP = N-acetyl-L-glutamyl 5-phosphate + ADP. It functions in the pathway amino-acid biosynthesis; L-arginine biosynthesis; N(2)-acetyl-L-ornithine from L-glutamate: step 2/4. Catalyzes the ATP-dependent phosphorylation of N-acetyl-L-glutamate. This Methanocaldococcus jannaschii (strain ATCC 43067 / DSM 2661 / JAL-1 / JCM 10045 / NBRC 100440) (Methanococcus jannaschii) protein is Acetylglutamate kinase.